An 89-amino-acid polypeptide reads, in one-letter code: Mu-theraphotoxin-Phlo1a (89 aa).

Residues 1–22 (MKVSVLITLAVLGVMFVWTSAA) form the signal peptide. Residues 23–52 (EQEDHGSDRRDSPALLKNLLGEEVFQSEER) constitute a propeptide that is removed on maturation. 3 disulfide bridges follow: Cys54–Cys68, Cys61–Cys73, and Cys67–Cys81. At Ile87 the chain carries Isoleucine amide.

The protein belongs to the neurotoxin 10 (Hwtx-1) family. 39 (Jztx-34) subfamily. As to expression, expressed by the venom gland.

The protein resides in the secreted. In terms of biological role, gating-modifier toxin that inhibits voltage-gated sodium channel Nav by shifting the threshold for channel activation to more positive potentials. This toxin moderately inhibits human Nav1.7/SCN9A (IC(50)=459 nM) and weakly inhibits hNav1.2/SCN2A and hNav1.5/SCN5A (&lt;20% inhibition at 1 uM peptide). Inhibition of Nav1.7 is voltage-dependent, with lower inhibition at more positive test pulses. This Phlogius sp. (Tarantula spider) protein is Mu-theraphotoxin-Phlo1a.